Here is a 700-residue protein sequence, read N- to C-terminus: MARKTPIDKYRNIGISAHIDAGKTTTTERVLFYTGVNHKIGEVHDGAATMDWMEQEQERGITITSAATTTFWKGMAGNMPEHRINIIDTPGHVDFTIEVERSMRVLDGACMVYCAVGGVQPQSETVWRQANKYQVPRLAFVNKMDRTGANFFKVYEQMRTRLKANPILIQIPIGAEENFKGVVDLVKMKAVYWDEASQGTKFTYEDIPVELQASAEEWCEKMLEAAAESSEELMEKYLGGEGLTEEEIKKALRQRTIANEIVPMLCGTAFKNKGVQAMLDAVVELLPSPLDVPPVPCELEDGTPAVRKASDDEKFSALAFKIMTDPFVGQLIFFRVYSGVMKSGDTIYNPIKGKKERVGRLLQMHANEREEIKEVFAGDIAAAVGLKDATTGETLCDPDSIVVLERMVFPEPVISQAVEPKTKADQEKMGFALNRLAQEDPSFRVKTDEESGQTIISGMGELHLEILVDRMKREFGVEATVGKPQVAYRETIRKTCDEVEGKFVKQSGGRGQYGHVVLKLEPQAPGKGFEFVDAIKGGVVPREYIPAVEKGIIETLNSGVLAGYPVVDVKATLFFGSYHDVDSNENAFKMAGSMAFKDGMRKAAPVLLEPMMAVEVETPEDFMGNVMGDFSSRRGILQGMDDIPGGGKIVRAEVPLAEMFGYSTGLRSLTQGRATYTMEFKHYAEAPKNVAEAVMAAKAK.

The 283-residue stretch at 8 to 290 (DKYRNIGISA…AVVELLPSPL (283 aa)) folds into the tr-type G domain. Residues 17-24 (AHIDAGKT), 88-92 (DTPGH), and 142-145 (NKMD) contribute to the GTP site.

It belongs to the TRAFAC class translation factor GTPase superfamily. Classic translation factor GTPase family. EF-G/EF-2 subfamily.

It localises to the cytoplasm. Functionally, catalyzes the GTP-dependent ribosomal translocation step during translation elongation. During this step, the ribosome changes from the pre-translocational (PRE) to the post-translocational (POST) state as the newly formed A-site-bound peptidyl-tRNA and P-site-bound deacylated tRNA move to the P and E sites, respectively. Catalyzes the coordinated movement of the two tRNA molecules, the mRNA and conformational changes in the ribosome. This chain is Elongation factor G, found in Polynucleobacter necessarius subsp. necessarius (strain STIR1).